A 347-amino-acid polypeptide reads, in one-letter code: UPF0284 protein SSO2213 (347 aa).

This sequence belongs to the UPF0284 family.

This Saccharolobus solfataricus (strain ATCC 35092 / DSM 1617 / JCM 11322 / P2) (Sulfolobus solfataricus) protein is UPF0284 protein SSO2213.